An 87-amino-acid chain; its full sequence is MERKLALLLILGMVTLASCGLREKHVQKLVALIPNDQLRSILKAVVHKVAKTQFGCPAYEGYCNDHCNDIERKDGECHGFKCKCAKD.

Positions 1–19 (MERKLALLLILGMVTLASC) are cleaved as a signal peptide. The BetaSPN-type CS-alpha/beta domain occupies 53–87 (QFGCPAYEGYCNDHCNDIERKDGECHGFKCKCAKD). Disulfide bonds link cysteine 56–cysteine 77, cysteine 63–cysteine 82, and cysteine 67–cysteine 84.

Belongs to the long chain scorpion toxin family. Class 1 subfamily. Expressed by the venom gland.

It is found in the secreted. In terms of biological role, specifically blocks voltage-gated potassium channels Kv4.2/KCND2. When measured at the peak current, the blocking effect of this toxin is about 65% and shows an IC(50)=652 nM. However, when measured at a later moment of the depolarising test pulse (500 ms), a 100% block of the current is observed with an IC(50)=313 nM. This may indicate a preference of the toxin for binding the inactivated state of the channel. The inhibition is completely reversible. In vivo, intraplantar injection into rat paw induces overt nociception (licking and lifting behaviors) and decreases the mechanical nociceptive threshold (hyperalgesia). Furthermore, the hyperalgesia is prolonged when intrathecal injections are performed. Its function is as follows. Induces discomfort and anxiety in mice, as it moderately diminishes locomotion (but has no effect on rearing behavior). Does not cause hemolysis, mast cell degranulation, LDH release, and does not have antimicrobial activity. Does not cause edema and pain. Does not induce hemolytic activity, lactate dehydrogenase (LDH) release from mast cells, mast cell degranulation, and antimicrobial effects. In vivo, injection into mice causes moderate edema formation, but induces very weak or no change in nociceptive sensibility. It also reduces mice locomotion, suggesting an increase in anxiety, but causes no alteration in rearing (standing on hind limbs). The sequence is that of Potassium channel toxin TsTXK-beta/Cryptide TyPep-16 from Tityus serrulatus (Brazilian scorpion).